We begin with the raw amino-acid sequence, 1375 residues long: DNA-directed RNA polymerase subunit beta (1375 aa).

The protein belongs to the RNA polymerase beta chain family. As to quaternary structure, the RNAP catalytic core consists of 2 alpha, 1 beta, 1 beta' and 1 omega subunit. When a sigma factor is associated with the core the holoenzyme is formed, which can initiate transcription.

The enzyme catalyses RNA(n) + a ribonucleoside 5'-triphosphate = RNA(n+1) + diphosphate. In terms of biological role, DNA-dependent RNA polymerase catalyzes the transcription of DNA into RNA using the four ribonucleoside triphosphates as substrates. In Coxiella burnetii (strain RSA 331 / Henzerling II), this protein is DNA-directed RNA polymerase subunit beta.